Consider the following 184-residue polypeptide: uncharacterized protein (184 aa).

Residues 1 to 24 are disordered; that stretch reads MGISDQINSNLSSQSPFTVSTNPS.

This is an uncharacterized protein from Dictyostelium discoideum (Social amoeba).